A 324-amino-acid polypeptide reads, in one-letter code: Glyoxylate/hydroxypyruvate reductase B (324 aa).

Catalysis depends on residues R237 and E266. H285 acts as the Proton donor in catalysis.

It belongs to the D-isomer specific 2-hydroxyacid dehydrogenase family. GhrB subfamily. Homodimer.

Its subcellular location is the cytoplasm. It carries out the reaction glycolate + NADP(+) = glyoxylate + NADPH + H(+). The enzyme catalyses (R)-glycerate + NAD(+) = 3-hydroxypyruvate + NADH + H(+). It catalyses the reaction (R)-glycerate + NADP(+) = 3-hydroxypyruvate + NADPH + H(+). Its function is as follows. Catalyzes the NADPH-dependent reduction of glyoxylate and hydroxypyruvate into glycolate and glycerate, respectively. This Salmonella schwarzengrund (strain CVM19633) protein is Glyoxylate/hydroxypyruvate reductase B.